A 176-amino-acid polypeptide reads, in one-letter code: Telomerase RNA component interacting RNase (176 aa).

The segment covering 1 to 12 (MAARGRRAEPQG) has biased composition (basic and acidic residues). The segment at 1 to 121 (MAARGRRAEP…TLSFVGKRRG (121 aa)) is disordered. Residues 45–56 (SGAGSSPVSGGV) show a composition bias toward low complexity. Basic and acidic residues predominate over residues 68–83 (LFKRKMEEEQRQRQEE). Low complexity predominate over residues 90-101 (RPDQSAAAAGPG). Lys146 carries the N6-acetyllysine modification.

In terms of assembly, part of the telomerase RNA 3' end complex which contains about 488 proteins.

Its activity is regulated as follows. Zn(2+) inhibits the RNase activity while Mg(2+), Ca(2+), Mn(2+), K(+), Na(+), EDTA and EGTA show little effect on the exoribonuclease activity. Exoribonuclease that is part of the telomerase RNA 3' end processing complex and which has the ability to cleave all four unpaired RNA nucleotides from the 5' end or 3' end with higher efficiency for purine bases. In Homo sapiens (Human), this protein is Telomerase RNA component interacting RNase.